Here is a 443-residue protein sequence, read N- to C-terminus: Xaa-Pro dipeptidase (443 aa).

Positions 244, 255, 339, 384, and 423 each coordinate Mn(2+).

The protein belongs to the peptidase M24B family. Bacterial-type prolidase subfamily. Mn(2+) serves as cofactor.

The catalysed reaction is Xaa-L-Pro dipeptide + H2O = an L-alpha-amino acid + L-proline. In terms of biological role, splits dipeptides with a prolyl residue in the C-terminal position. This is Xaa-Pro dipeptidase from Pseudoalteromonas atlantica (strain T6c / ATCC BAA-1087).